The sequence spans 662 residues: U6 snRNA-specific terminal uridylyltransferase (662 aa).

Residues aspartate 183 and aspartate 185 each coordinate Mg(2+). The PAP-associated domain occupies cysteine 384 to histidine 437.

This sequence belongs to the DNA polymerase type-B-like family. Forms a complex composed of sart-3, terminal uridylyltransferase usip-1 and U6 snRNA; complex formation is mediated by usip-1 and sart-3 binding to U6 snRNA. The cofactor is Mg(2+). Mn(2+) is required as a cofactor. As to expression, ubiquitously expressed.

The protein resides in the nucleus. It is found in the nucleoplasm. It catalyses the reaction RNA(n) + UTP = RNA(n)-3'-uridine ribonucleotide + diphosphate. In terms of biological role, acts as a specific terminal uridylyltransferase for U6 snRNA. Responsible for the addition of UTP at the 3' end of U6 snRNA which stabilizes U6 snRNA. Does not have activity towards modified uridine containing 3'-monophosphorylation or 2'-O-methylation. In Caenorhabditis elegans, this protein is U6 snRNA-specific terminal uridylyltransferase.